The primary structure comprises 833 residues: Leucine--tRNA ligase (833 aa).

The short motif at 41–52 is the 'HIGH' region element; it reads PYPSGAGLHVGH. Positions 610–614 match the 'KMSKS' region motif; the sequence is KMSKS. Position 613 (Lys-613) interacts with ATP.

This sequence belongs to the class-I aminoacyl-tRNA synthetase family.

The protein localises to the cytoplasm. The catalysed reaction is tRNA(Leu) + L-leucine + ATP = L-leucyl-tRNA(Leu) + AMP + diphosphate. In Streptococcus pyogenes serotype M12 (strain MGAS2096), this protein is Leucine--tRNA ligase.